The following is a 452-amino-acid chain: MNKILIAAASSGTGKTTVTLGIMHALKKRGLRVQPFKVGPDYIDTNYHQAITGVASINLDSFLIDDDAMLAALFEKHGQSADISVIEGVMGLFDGLGIDRDNSSTSFIAKCTKTPVILVVDGKAISTSAAAIVDGFNRFDPELTIAGVIINRVASENHFSLIKGAIERYTDVPVLGYLPKNAAVALPERHLGLVPKEEMTELETKWEVLGDLIAEHVDLDRLLAISKTGAKLTVHPPEIQVPDFSGMRVAYALDAAFHFYYQDNLDFIRSTGATLIPFSPLEEREVPDADFIYIGGGFPEVFAERLAKNKSMHESILAAHEQGKPIYAECGGLMYLGSSLEMEAESYEMVGVFDGVSKMTTRLRKFGYCIAEPLEDTLLGKKGTAIRGHEFHHSVFETTEPTRMKLTKKRDGETVKEWHGGYQKGNTFASYLHIHFYQNLAMITHMFGAIER.

The GATase cobBQ-type domain occupies 248 to 441; it reads RVAYALDAAF…LHIHFYQNLA (194 aa). The active-site Nucleophile is the C330.

Belongs to the CobB/CbiA family. Requires Mg(2+) as cofactor.

It carries out the reaction cob(II)yrinate + 2 L-glutamine + 2 ATP + 2 H2O = cob(II)yrinate a,c diamide + 2 L-glutamate + 2 ADP + 2 phosphate + 2 H(+). It participates in cofactor biosynthesis; adenosylcobalamin biosynthesis; cob(II)yrinate a,c-diamide from sirohydrochlorin (anaerobic route): step 10/10. In terms of biological role, catalyzes the ATP-dependent amidation of the two carboxylate groups at positions a and c of cobyrinate, using either L-glutamine or ammonia as the nitrogen source. The protein is Cobyrinate a,c-diamide synthase of Listeria monocytogenes serovar 1/2a (strain ATCC BAA-679 / EGD-e).